The chain runs to 272 residues: 1,4-dihydroxy-6-naphtoate synthase (272 aa).

Residues 55–57 (KLS) and 107–108 (TA) each bind substrate. Catalysis depends on His145, which acts as the Proton acceptor.

The protein belongs to the MqnA/MqnD family. MqnD subfamily.

The catalysed reaction is cyclic dehypoxanthinylfutalosinate = 1,4-dihydroxy-6-naphthoate + dihydroxyacetone. The protein operates within quinol/quinone metabolism; menaquinone biosynthesis. Its function is as follows. Catalyzes the conversion of cyclic dehypoxanthine futalosine (cyclic DHFL) into 1,4-dihydroxy-6-naphthoate, a step in the biosynthesis of menaquinone (MK, vitamin K2). The protein is 1,4-dihydroxy-6-naphtoate synthase of Thermus thermophilus (strain ATCC 27634 / DSM 579 / HB8).